An 83-amino-acid polypeptide reads, in one-letter code: RNA-binding protein Hfq (83 aa).

In terms of domain architecture, Sm spans Asp-10–Ile-70.

Belongs to the Hfq family. In terms of assembly, homohexamer.

Its function is as follows. RNA chaperone that binds small regulatory RNA (sRNAs) and mRNAs to facilitate mRNA translational regulation in response to envelope stress, environmental stress and changes in metabolite concentrations. Also binds with high specificity to tRNAs. This chain is RNA-binding protein Hfq, found in Desulfitobacterium hafniense (strain Y51).